Reading from the N-terminus, the 775-residue chain is E3 ubiquitin-protein ligase UHRF1 (775 aa).

The Ubiquitin-like domain occupies 1–77 (MWIQVRTMDG…IVQLLVRQIP (77 aa)). Residues 81–128 (PTKDKECGISDADSGCGSGQGESDKNSSCGEGATDVDGQPAGINSENV) form a disordered region. 2 tudor-like regions span residues 131-207 (SLYK…LRAR) and 214-283 (DLKV…IEEP). Positions 293–301 (PQKRQNGPE) are linker. The PHD-type zinc finger occupies 299–366 (GPECKHCKDN…DWYCPDCRND (68 aa)). Histone H3R2me0 binding stretches follow at residues 333–337 (CDECD) and 353–355 (PQD). The 164-residue stretch at 419–582 (GPIPGVPVGT…FLVWRYLLRR (164 aa)) folds into the YDG domain. The segment at 445 to 446 (HV) is required to promote base flipping. Residues 463–464 (AG) and aspartate 469 contribute to the DNA site. 2 required for formation of a 5-methylcytosine-binding pocket regions span residues 466–469 (YEDD) and 478–481 (YTGS). The span at 616–628 (ASKEREKENKTED) shows a compositional bias: basic and acidic residues. Residues 616-655 (ASKEREKENKTEDELSESPSKGKRKRNSAGSGLSDAKSTP) form a disordered region. The RING-type zinc finger occupies 706–745 (CICCQEVVYEPITTECHHNICKGCLDRSFKALVHNCPACR).

It is found in the nucleus. The catalysed reaction is S-ubiquitinyl-[E2 ubiquitin-conjugating enzyme]-L-cysteine + [acceptor protein]-L-lysine = [E2 ubiquitin-conjugating enzyme]-L-cysteine + N(6)-ubiquitinyl-[acceptor protein]-L-lysine.. It participates in protein modification; protein ubiquitination. In terms of biological role, multidomain protein that acts as a key epigenetic regulator by bridging DNA methylation and chromatin modification. Specifically recognizes and binds hemimethylated DNA at replication forks via its YDG domain and recruits dnmt1 methyltransferase to ensure faithful propagation of the DNA methylation patterns through DNA replication. In addition to its role in maintenance of DNA methylation, also plays a key role in chromatin modification: through its tudor-like regions and PHD-type zinc fingers, specifically recognizes and binds histone H3 trimethylated at 'Lys-9' (H3K9me3) and unmethylated at 'Arg-2' (H3R2me0), respectively, and recruits chromatin proteins. Enriched in pericentric heterochromatin where it recruits different chromatin modifiers required for this chromatin replication. Also localizes to euchromatic regions where it negatively regulates transcription possibly by impacting DNA methylation and histone modifications. Has E3 ubiquitin-protein ligase activity by mediating the ubiquitination of target proteins. However, it is still unclear how E3 ubiquitin-protein ligase activity is related to its role in chromatin in vivo. The polypeptide is E3 ubiquitin-protein ligase UHRF1 (uhrf1) (Xenopus tropicalis (Western clawed frog)).